We begin with the raw amino-acid sequence, 111 residues long: Stress-response A/B barrel domain-containing protein At5g22580 (111 aa).

A Stress-response A/B barrel domain is found at 6-98 (FKHLVVVKFK…VIDKIVLLDF (93 aa)). Residues valine 31, isoleucine 34, aspartate 35, and valine 37 each contribute to the Mg(2+) site.

As to quaternary structure, homodimer. It depends on Mg(2+) as a cofactor.

Its function is as follows. Involved in stress response. The protein is Stress-response A/B barrel domain-containing protein At5g22580 of Arabidopsis thaliana (Mouse-ear cress).